The chain runs to 770 residues: DNA ligase 1 (770 aa).

A compositionally biased stretch (low complexity) spans 1–18 (MSTGEGTAEQTATGTPAQ). The interval 1 to 27 (MSTGEGTAEQTATGTPAQNGRESIPSD) is disordered. NAD(+) contacts are provided by residues 57-61 (DAEFD), 106-107 (SL), and glutamate 142. The N6-AMP-lysine intermediate role is filled by lysine 144. NAD(+)-binding residues include arginine 165, glutamate 202, lysine 318, and lysine 342. The Zn(2+) site is built by cysteine 439, cysteine 442, cysteine 458, and cysteine 464. The BRCT domain occupies 657–746 (STPRTLEGLT…PAAVGDAAEA (90 aa)). Positions 741-770 (GDAAEADGGDAPEESAALQEEKAAAVEETA) are disordered. Acidic residues predominate over residues 744-753 (AEADGGDAPE). The span at 759–770 (QEEKAAAVEETA) shows a compositional bias: basic and acidic residues.

It belongs to the NAD-dependent DNA ligase family. LigA subfamily. Mg(2+) is required as a cofactor. It depends on Mn(2+) as a cofactor.

The catalysed reaction is NAD(+) + (deoxyribonucleotide)n-3'-hydroxyl + 5'-phospho-(deoxyribonucleotide)m = (deoxyribonucleotide)n+m + AMP + beta-nicotinamide D-nucleotide.. Functionally, DNA ligase that catalyzes the formation of phosphodiester linkages between 5'-phosphoryl and 3'-hydroxyl groups in double-stranded DNA using NAD as a coenzyme and as the energy source for the reaction. It is essential for DNA replication and repair of damaged DNA. This chain is DNA ligase 1, found in Pseudarthrobacter chlorophenolicus (strain ATCC 700700 / DSM 12829 / CIP 107037 / JCM 12360 / KCTC 9906 / NCIMB 13794 / A6) (Arthrobacter chlorophenolicus).